The chain runs to 356 residues: MKFLDEAKVYIRSGDGGNGCVAFRREKFIEYGGPNGGNGGRGGDVIIETVDGLNTLIDYRYQQHFKAQKGGHGMGSDRHGAGGDDIVLKVPVGTQVFDEDRETLLHDFTRLGERFVIAKGGNGGFGNAHFKSSTNRAPRHANPGQPGEERWIWLRMKLIADAGLVGLPNAGKSTFLSVVSAAKPKIADYPFTTLHPQLGVVRSDGREFVLADIPGLIEGAHEGTGLGDRFLGHVERCRVLLHLVDATCEHAGKAYKIVRNELAAYEHDLTDKVEIVALNKIDAVTPEQLKEQKARLKRAAKQTPMLVSGVTGEGVPEVLRALTDVISEAPVSTKAKGEPTENETPPPSTGWSPLSN.

In terms of domain architecture, Obg spans 1-159 (MKFLDEAKVY…RWIWLRMKLI (159 aa)). The region spanning 160–327 (ADAGLVGLPN…VLRALTDVIS (168 aa)) is the OBG-type G domain. Residues 166–173 (GLPNAGKS), 191–195 (FTTLH), 212–215 (DIPG), 279–282 (NKID), and 308–310 (SGV) each bind GTP. Residues Ser-173 and Thr-193 each contribute to the Mg(2+) site. The segment at 329-356 (APVSTKAKGEPTENETPPPSTGWSPLSN) is disordered.

The protein belongs to the TRAFAC class OBG-HflX-like GTPase superfamily. OBG GTPase family. Monomer. It depends on Mg(2+) as a cofactor.

It is found in the cytoplasm. Functionally, an essential GTPase which binds GTP, GDP and possibly (p)ppGpp with moderate affinity, with high nucleotide exchange rates and a fairly low GTP hydrolysis rate. Plays a role in control of the cell cycle, stress response, ribosome biogenesis and in those bacteria that undergo differentiation, in morphogenesis control. The chain is GTPase Obg from Afipia carboxidovorans (strain ATCC 49405 / DSM 1227 / KCTC 32145 / OM5) (Oligotropha carboxidovorans).